Here is a 474-residue protein sequence, read N- to C-terminus: Serine/threonine-protein kinase VRK3 (474 aa).

The segment covering 41–58 (HVSSFQGSKRGLNSSFET) has biased composition (polar residues). The disordered stretch occupies residues 41–152 (HVSSFQGSKR…SRVTTSLEAL (112 aa)). The short motif at 49–64 (KRGLNSSFETSPKKVK) is the Nuclear localization signal element. Serine 54, serine 55, serine 59, serine 82, serine 83, and serine 90 each carry phosphoserine. The segment covering 88–101 (TLSSSERSKGSGSR) has biased composition (low complexity). The segment covering 107–149 (SSPQKTRKSPQVTRGSPQKTSCSPQKTRQSPQTLKRSRVTTSL) has biased composition (polar residues). Serine 108 bears the Phosphoserine; by CDK5 mark. Residues serine 115 and serine 122 each carry the phosphoserine modification. The Protein kinase domain maps to 166–457 (WKLKSFQTRD…MLRNNLEALL (292 aa)).

This sequence belongs to the protein kinase superfamily. CK1 Ser/Thr protein kinase family. VRK subfamily. Interacts with DUSP3. Interacts with RAN. Interacts with HSP70/HSPA1A. In terms of processing, phosphorylated at Ser-108 by CDK5; leading to protection of the cell against H2O2-induced apoptosis. Post-translationally, ubiquitinated by RNF144A.

It localises to the nucleus. The protein localises to the cytoplasm. The catalysed reaction is L-seryl-[protein] + ATP = O-phospho-L-seryl-[protein] + ADP + H(+). Its function is as follows. Plays a role in the regulation of the cell cycle by phosphorylating the nuclear envelope protein barrier-to-autointegration factor/BAF that is required for disassembly and reassembly, respectively, of the nuclear envelope during mitosis. Under normal physiological conditions, negatively regulates ERK activity along with VHR/DUSP3 phosphatase in the nucleus, causing timely and transient action of ERK. Stress conditions activate CDK5 which phosphorylates VRK3 to increase VHR phosphatase activity and suppress prolonged ERK activation that causes cell death. For example, upon glutamate induction, promotes nuclear localization of HSP70/HSPA1A to inhibit ERK activation via VHR/DUSP3 phosphatase. The protein is Serine/threonine-protein kinase VRK3 (VRK3) of Homo sapiens (Human).